A 104-amino-acid chain; its full sequence is Large ribosomal subunit protein uL24 (104 aa).

This sequence belongs to the universal ribosomal protein uL24 family. In terms of assembly, part of the 50S ribosomal subunit.

One of two assembly initiator proteins, it binds directly to the 5'-end of the 23S rRNA, where it nucleates assembly of the 50S subunit. Functionally, one of the proteins that surrounds the polypeptide exit tunnel on the outside of the subunit. The sequence is that of Large ribosomal subunit protein uL24 from Shewanella pealeana (strain ATCC 700345 / ANG-SQ1).